The sequence spans 105 residues: MTTNRLVLSGTVCKTPVRKVSPSGIPHCQFVLEHRSTQQEAGFSRQTWCRMPIVVSGQQSQALTHSITVGSQLTVEGFISCHQGRNGLNKLVLHAEQIEFIDSGD.

One can recognise an SSB domain in the interval methionine 1 to aspartate 102.

It belongs to the PriB family. Homodimer. Interacts with PriA and DnaT. Component of the replication restart primosome. Primosome assembly occurs via a 'hand-off' mechanism. PriA binds to replication forks, subsequently PriB then DnaT bind; DnaT then displaces ssDNA to generate the helicase loading substrate.

Involved in the restart of stalled replication forks, which reloads the replicative helicase on sites other than the origin of replication; the PriA-PriB pathway is the major replication restart pathway. During primosome assembly it facilitates complex formation between PriA and DnaT on DNA; stabilizes PriA on DNA. Stimulates the DNA unwinding activity of PriA helicase. The polypeptide is Replication restart protein PriB (Yersinia pseudotuberculosis serotype O:1b (strain IP 31758)).